A 304-amino-acid polypeptide reads, in one-letter code: Iron(III) enterobactin esterase (304 aa).

The N-terminal stretch at 1 to 25 (MRTSLLVAALGLALAAALPGGAPLA) is a signal peptide. Residues S182, E242, and H283 each act as charge relay system in the active site.

It belongs to the esterase D family. Monomer.

It localises to the periplasm. It catalyses the reaction Fe(III)-enterobactin + 3 H2O + H(+) = Fe(III)-[N-(2,3-dihydroxybenzoyl)-L-serine] + 2 N-(2,3-dihydroxybenzoyl)-L-serine. It carries out the reaction Fe(III)-enterobactin + H2O = Fe(III)-[N-(2,3-dihydroxybenzoyl)-L-serine]3 + H(+). The enzyme catalyses Fe(III)-[N-(2,3-dihydroxybenzoyl)-L-serine]3 + H2O + H(+) = Fe(III)-[N-(2,3-dihydroxybenzoyl)-L-serine]2 + N-(2,3-dihydroxybenzoyl)-L-serine. The catalysed reaction is Fe(III)-[N-(2,3-dihydroxybenzoyl)-L-serine]2 + H2O + H(+) = Fe(III)-[N-(2,3-dihydroxybenzoyl)-L-serine] + N-(2,3-dihydroxybenzoyl)-L-serine. Functionally, catalyzes the hydrolysis of ferric enterobactin (Fe-Ent). Hydrolyzes Fe-Ent into three molecules of 2,3-dihydroxybenzoylserine (DHBS) still complexed with ferric iron. Iron reduction is necessary to obtain complete release of the metal from DHBS. It can hydrolyze salmochelin S4 (diglucosyl-C-Ent) but is not involved in iron acquisition by this siderophore. This Pseudomonas aeruginosa (strain ATCC 15692 / DSM 22644 / CIP 104116 / JCM 14847 / LMG 12228 / 1C / PRS 101 / PAO1) protein is Iron(III) enterobactin esterase.